We begin with the raw amino-acid sequence, 83 residues long: Protein MATERNALLY EXPRESSED GENE 3 (83 aa).

An N-terminal signal peptide occupies residues 1–22; the sequence is MQWLAFVAPRWRCVCDQELSAQ. Cysteines 60 and 82 form a disulfide.

It belongs to the MEG family. Expressed in endosperm, anther and pollen.

The sequence is that of Protein MATERNALLY EXPRESSED GENE 3 (MEG3) from Zea mays (Maize).